Reading from the N-terminus, the 420-residue chain is uncharacterized protein (420 aa).

This is an uncharacterized protein from Pseudanabaena tenuis (strain PCC 7409).